We begin with the raw amino-acid sequence, 493 residues long: Phospholipid transfer protein (493 aa).

Residues 1 to 17 (MALFGALFLALLAGAHA) form the signal peptide. Asn64 is a glycosylation site (N-linked (GlcNAc...) (complex) asparagine). A glycan (N-linked (GlcNAc...) asparagine) is linked at Asn94. Asn117 is a glycosylation site (N-linked (GlcNAc...) (complex) asparagine). Asn143 is a glycosylation site (N-linked (GlcNAc...) asparagine). An intrachain disulfide couples Cys146 to Cys185. Residue Asn245 is glycosylated (N-linked (GlcNAc...) (complex) asparagine). An N-linked (GlcNAc...) asparagine glycan is attached at Asn398.

It belongs to the BPI/LBP/Plunc superfamily. BPI/LBP family. Glycosylation is necessary for secretion and its phospholipid transfer activity. In terms of tissue distribution, widely expressed. Highest level of expression in the ovary, thymus and placenta, with moderate levels found in the pancreas, small intestine, testis, lung and prostrate. Low level expression in the kidney, liver and spleen, with very low levels found in the heart, colon, skeletal muscle, leukocytes and brain. Expressed in the cortical neurons.

It is found in the secreted. The protein resides in the nucleus. The catalysed reaction is a 1,2-diacyl-sn-glycero-3-phosphocholine(in) = a 1,2-diacyl-sn-glycero-3-phosphocholine(out). The enzyme catalyses a 1,2-diacyl-sn-glycero-3-phosphoethanolamine(in) = a 1,2-diacyl-sn-glycero-3-phosphoethanolamine(out). It catalyses the reaction a 1,2-diacyl-sn-glycerol(in) = a 1,2-diacyl-sn-glycerol(out). It carries out the reaction a 1,2-diacyl-sn-glycero-3-phosphate(in) = a 1,2-diacyl-sn-glycero-3-phosphate(out). The catalysed reaction is a sphingomyelin(in) = a sphingomyelin(out). The enzyme catalyses a 1,2-diacyl-sn-glycero-3-phospho-(1'-sn-glycerol)(in) = a 1,2-diacyl-sn-glycero-3-phospho-(1'-sn-glycerol)(out). It catalyses the reaction a 1,2-diacyl-sn-glycero-3-phospho-(1D-myo-inositol)(in) = a 1,2-diacyl-sn-glycero-3-phospho-(1D-myo-inositol)(out). It carries out the reaction 1-hexadecanoyl-2-(5Z,8Z,11Z,14Z-eicosatetraenoyl)-sn-glycero-3-phosphoethanolamine(in) = 1-hexadecanoyl-2-(5Z,8Z,11Z,14Z-eicosatetraenoyl)-sn-glycero-3-phosphoethanolamine(out). The catalysed reaction is N-(hexadecanoyl)-sphing-4-enine-1-phosphocholine(in) = N-(hexadecanoyl)-sphing-4-enine-1-phosphocholine(out). The enzyme catalyses 1,2-dihexadecanoyl-sn-glycero-3-phosphocholine(in) = 1,2-dihexadecanoyl-sn-glycero-3-phosphocholine(out). In terms of biological role, mediates the transfer of phospholipids and free cholesterol from triglyceride-rich lipoproteins (low density lipoproteins or LDL and very low density lipoproteins or VLDL) into high-density lipoproteins (HDL) as well as the exchange of phospholipids between triglyceride-rich lipoproteins themselves. Facilitates the transfer of a spectrum of different lipid molecules, including diacylglycerol, phosphatidic acid, sphingomyelin, phosphatidylcholine, phosphatidylinositol, phosphatidylglycerol, cerebroside and phosphatidyl ethanolamine. Plays an important role in HDL remodeling which involves modulating the size and composition of HDL. Also plays a key role in the uptake of cholesterol from peripheral cells and tissues that is subsequently transported to the liver for degradation and excretion. Two distinct forms of PLTP exist in plasma: an active form that can transfer phosphatidylcholine from phospholipid vesicles to HDL, and an inactive form that lacks this capability. The sequence is that of Phospholipid transfer protein (PLTP) from Homo sapiens (Human).